Reading from the N-terminus, the 293-residue chain is uncharacterized protein (293 aa).

The active site involves aspartate 119.

Belongs to the pseudouridine synthase RluA family.

The catalysed reaction is a uridine in RNA = a pseudouridine in RNA. This is an uncharacterized protein from Helicobacter pylori (strain J99 / ATCC 700824) (Campylobacter pylori J99).